The following is a 117-amino-acid chain: Large ribosomal subunit protein uL18 (117 aa).

It belongs to the universal ribosomal protein uL18 family. In terms of assembly, part of the 50S ribosomal subunit; part of the 5S rRNA/L5/L18/L25 subcomplex. Contacts the 5S and 23S rRNAs.

Its function is as follows. This is one of the proteins that bind and probably mediate the attachment of the 5S RNA into the large ribosomal subunit, where it forms part of the central protuberance. The chain is Large ribosomal subunit protein uL18 from Klebsiella pneumoniae (strain 342).